Consider the following 65-residue polypeptide: Large ribosomal subunit protein bL35 (65 aa).

Belongs to the bacterial ribosomal protein bL35 family.

In Sodalis glossinidius (strain morsitans), this protein is Large ribosomal subunit protein bL35.